The primary structure comprises 283 residues: Stage II sporulation protein Q (283 aa).

A helical membrane pass occupies residues 22-42 (WVFPAIYLVSAAVILTAVLWY). The disordered stretch occupies residues 228–283 (EKAATQETEESIQQSSEKKDGSTEKGTEEKSGEKKDDSTDKSGSKESSTTEDTEQS). A compositionally biased stretch (basic and acidic residues) spans 243-271 (SEKKDGSTEKGTEEKSGEKKDDSTDKSGS).

In terms of assembly, interacts with SpoIIIAH and SpoIIE.

The protein resides in the forespore membrane. In terms of biological role, involved in forespore engulfment and required for anchoring membrane proteins on the forespore side of the septal membrane. Forms a channel with SpoIIIAH that is open on the forespore end and closed (or gated) on the mother cell end. This allows sigma-E-directed gene expression in the mother-cell compartment of the sporangium to trigger the activation of sigma-G forespore-specific gene expression by a pathway of intercellular signaling. This chain is Stage II sporulation protein Q (spoIIQ), found in Bacillus subtilis (strain 168).